Reading from the N-terminus, the 400-residue chain is 1-deoxy-D-xylulose 5-phosphate reductoisomerase (400 aa).

5 residues coordinate NADPH: T17, G18, S19, I20, and N131. K132 serves as a coordination point for 1-deoxy-D-xylulose 5-phosphate. An NADPH-binding site is contributed by E133. A Mn(2+)-binding site is contributed by D157. Positions 158, 159, 188, and 211 each coordinate 1-deoxy-D-xylulose 5-phosphate. E159 provides a ligand contact to Mn(2+). Position 217 (G217) interacts with NADPH. Positions 224, 229, 230, and 233 each coordinate 1-deoxy-D-xylulose 5-phosphate. E233 is a Mn(2+) binding site.

Belongs to the DXR family. Mg(2+) is required as a cofactor. It depends on Mn(2+) as a cofactor.

The enzyme catalyses 2-C-methyl-D-erythritol 4-phosphate + NADP(+) = 1-deoxy-D-xylulose 5-phosphate + NADPH + H(+). It participates in isoprenoid biosynthesis; isopentenyl diphosphate biosynthesis via DXP pathway; isopentenyl diphosphate from 1-deoxy-D-xylulose 5-phosphate: step 1/6. Catalyzes the NADPH-dependent rearrangement and reduction of 1-deoxy-D-xylulose-5-phosphate (DXP) to 2-C-methyl-D-erythritol 4-phosphate (MEP). The polypeptide is 1-deoxy-D-xylulose 5-phosphate reductoisomerase (Pseudomonas putida (strain ATCC 47054 / DSM 6125 / CFBP 8728 / NCIMB 11950 / KT2440)).